The following is a 149-amino-acid chain: UPF0178 protein Cphy_3042 (149 aa).

Positions 112-128 (QRRHGKQNLHSKNNKKR) are enriched in basic residues. The segment at 112–132 (QRRHGKQNLHSKNNKKRTTGD) is disordered.

It belongs to the UPF0178 family.

The protein is UPF0178 protein Cphy_3042 of Lachnoclostridium phytofermentans (strain ATCC 700394 / DSM 18823 / ISDg) (Clostridium phytofermentans).